The sequence spans 236 residues: 1-(5-phosphoribosyl)-5-[(5-phosphoribosylamino)methylideneamino] imidazole-4-carboxamide isomerase (236 aa).

The Proton acceptor role is filled by Asp8. Asp129 acts as the Proton donor in catalysis.

The protein belongs to the HisA/HisF family.

Its subcellular location is the cytoplasm. It carries out the reaction 1-(5-phospho-beta-D-ribosyl)-5-[(5-phospho-beta-D-ribosylamino)methylideneamino]imidazole-4-carboxamide = 5-[(5-phospho-1-deoxy-D-ribulos-1-ylimino)methylamino]-1-(5-phospho-beta-D-ribosyl)imidazole-4-carboxamide. The protein operates within amino-acid biosynthesis; L-histidine biosynthesis; L-histidine from 5-phospho-alpha-D-ribose 1-diphosphate: step 4/9. This is 1-(5-phosphoribosyl)-5-[(5-phosphoribosylamino)methylideneamino] imidazole-4-carboxamide isomerase from Methanoregula boonei (strain DSM 21154 / JCM 14090 / 6A8).